We begin with the raw amino-acid sequence, 279 residues long: Cyanocobalamin reductase / alkylcobalamin dealkylase (279 aa).

Substrate contacts are provided by residues Asp104, 115–118, 129–131, Cys149, and Ile160; these read ILAQ and YYQ. The tract at residues 239–279 is disordered; that stretch reads PSEHPSTTSELPLSLLTKPQNSRRARSWLSPSVSPPVSPGP. Positions 243–257 are enriched in low complexity; the sequence is PSTTSELPLSLLTKP. 3 positions are modified to phosphoserine: Ser247, Ser272, and Ser276.

This sequence belongs to the MMACHC family. As to quaternary structure, monomer in the absence of bound substrate. Homodimer; dimerization is triggered by binding to FMN or adenosylcobalamin. Interacts with LMBRD1 and ABCD4; the interaction ensures the transport of cobalamin from the lysosome to the cytoplasm. Forms a multiprotein complex with MMADHC, MTR and MTRR; the interaction with MTR could modulate MMACHC-dependent processing of cobalamin. Heterodimer with MMADHC; the interaction might play a role in the regulation of the balance between AdoCbl and MeCbl synthesis. The cofactor is FAD. FMN is required as a cofactor. Detected in liver and kidney (at protein level). Detected in embryos.

The protein localises to the cytoplasm. The protein resides in the cytosol. The enzyme catalyses 2 cob(II)alamin-[cyanocobalamin reductase] + 2 hydrogen cyanide + NADP(+) = 2 cyanocob(III)alamin + 2 apo-[cyanocobalamin reductase] + NADPH + H(+). The catalysed reaction is apo-[alkylcobalamin reductase] + an R-cob(III)alamin + glutathione = cob(I)alamin-[alkylcobalamin reductase] + an S-substituted glutathione + H(+). It catalyses the reaction apo-[alkylcobalamin reductase] + methylcob(III)alamin + glutathione = S-methyl glutathione + cob(I)alamin-[alkylcobalamin reductase] + H(+). It carries out the reaction apo-[alkylcobalamin reductase] + adenosylcob(III)alamin + glutathione = S-adenosylglutathione + cob(I)alamin-[alkylcobalamin reductase] + H(+). In terms of biological role, cobalamin (vitamin B12) cytosolic chaperone that catalyzes the reductive decyanation of cyanocob(III)alamin (cyanocobalamin, CNCbl) to yield cob(II)alamin and cyanide, using FAD or FMN as cofactors and NADPH as cosubstrate. Cyanocobalamin constitutes the inactive form of vitamin B12 introduced from the diet, and is converted into the active cofactors methylcobalamin (MeCbl) involved in methionine biosynthesis, and 5'-deoxyadenosylcobalamin (AdoCbl) involved in the TCA cycle. Forms a complex with the lysosomal transporter ABCD4 and its chaperone LMBRD1, to transport cobalamin across the lysosomal membrane into the cytosol. The processing of cobalamin in the cytosol occurs in a multiprotein complex composed of at least MMACHC, MMADHC, MTRR (methionine synthase reductase) and MTR (methionine synthase) which may contribute to shuttle safely and efficiently cobalamin towards MTR in order to produce methionine. Also acts as a glutathione transferase by catalyzing the dealkylation of the alkylcob(III)alamins MeCbl and AdoCbl, using the thiolate of glutathione for nucleophilic displacement to generate cob(I)alamin and the corresponding glutathione thioether. The conversion of incoming MeCbl or AdoCbl into a common intermediate cob(I)alamin is necessary to meet the cellular needs for both cofactors. Cysteine and homocysteine cannot substitute for glutathione in this reaction. This chain is Cyanocobalamin reductase / alkylcobalamin dealkylase, found in Mus musculus (Mouse).